The chain runs to 383 residues: Homeobox protein knotted-1-like 5 (383 aa).

Disordered stretches follow at residues 1-35 and 52-73; these read MSFN…HFSE and TTAD…ADTN. Residues 281–301 form the ELK domain; that stretch reads ELKHELKQGFKEKIVDIREEI. Positions 302–365 form a DNA-binding region, homeobox; TALE-type; it reads MRKRRAGKLP…NQRKRNWNSN (64 aa). Positions 361-383 are disordered; that stretch reads NWNSNSSTSSTLTKNKRKRTGKS. Low complexity predominate over residues 362–373; it reads WNSNSSTSSTLT. Residues 374–383 show a composition bias toward basic residues; that stretch reads KNKRKRTGKS.

It belongs to the TALE/KNOX homeobox family. In terms of assembly, may form heterodimeric complex with the TALE/BELL protein BEL1, BLH1 and BLH2. Interacts with OFP1, OFP2, OFP3 and OFP4.

The protein resides in the nucleus. This is Homeobox protein knotted-1-like 5 (KNAT5) from Arabidopsis thaliana (Mouse-ear cress).